The following is a 515-amino-acid chain: Cytidine and dCMP deaminase domain-containing protein 1 (515 aa).

2 stretches are compositionally biased toward polar residues: residues 1–11 (MKEAGQMQNLE) and 18–27 (SVSTQTGSMT). Disordered regions lie at residues 1-27 (MKEAGQMQNLESARAGRSVSTQTGSMT) and 56-83 (RQKSQKNEEGKHGPLGDNEEMTRVSTDK). Residues 60–83 (QKNEEGKHGPLGDNEEMTRVSTDK) are compositionally biased toward basic and acidic residues. Positions 71-169 (GDNEEMTRVS…SLLTEASSSE (99 aa)) constitute a CMP/dCMP-type deaminase 1 domain. Residues histidine 110, cysteine 135, and cysteine 138 each coordinate Zn(2+). The Nuclear export signal signature appears at 272–284 (NLRQNMKDLILLL). The 166-residue stretch at 318–483 (EIARHCMVQA…LNPSEAYGLE (166 aa)) folds into the CMP/dCMP-type deaminase 2 domain. Position 399 (histidine 399) interacts with Zn(2+). Glutamate 401 acts as the Proton donor in catalysis. Zn(2+) contacts are provided by cysteine 427 and cysteine 430. The interval 481–515 (GLEQNEPERRENGVLRPVPQKEEQHQDKKLRLGIH) is disordered. Over residues 486-515 (EPERRENGVLRPVPQKEEQHQDKKLRLGIH) the composition is skewed to basic and acidic residues. A Bipartite nuclear localization signal motif is present at residues 489–511 (RRENGVLRPVPQKEEQHQDKKLR).

Belongs to the cytidine and deoxycytidylate deaminase family. Zn(2+) serves as cofactor.

It is found in the cytoplasm. The protein localises to the nucleus. It carries out the reaction 2'-deoxycytidine + H2O + H(+) = 2'-deoxyuridine + NH4(+). It catalyses the reaction cytidine + H2O + H(+) = uridine + NH4(+). Its function is as follows. Catalyzes the deamination of cytidine and deoxycytidine into uridine and deoxyuridine, respectively. May play an important role in testicular development and spermatogenesis. The protein is Cytidine and dCMP deaminase domain-containing protein 1 (CDADC1) of Macaca fascicularis (Crab-eating macaque).